The primary structure comprises 96 residues: Putative defensin-like protein 263 (96 aa).

A signal peptide spans 1-26 (MEKTSLKLVFLFSLTVIALCLSLSAA). Disulfide bonds link C48–C96, C67–C86, C73–C91, and C77–C93.

This sequence belongs to the DEFL family.

Its subcellular location is the secreted. The sequence is that of Putative defensin-like protein 263 from Arabidopsis thaliana (Mouse-ear cress).